Here is a 295-residue protein sequence, read N- to C-terminus: Alpha-1A adrenergic receptor (295 aa).

Residues 1 to 27 (MVFLSGNASDSSNCTHPPAPVNISKAI) are Extracellular-facing. N-linked (GlcNAc...) asparagine glycans are attached at residues Asn7, Asn13, and Asn22. A helical membrane pass occupies residues 28–51 (LLGVILGGLIIFGVLGNILVILSV). At 52-64 (ACHRHLHSVTHYY) the chain is on the cytoplasmic side. A helical transmembrane segment spans residues 65-88 (IVNLAVADLLLTSTVLPFSAIFEI). The Extracellular segment spans residues 89 to 99 (LGYWAFGRVFC). A disulfide bridge links Cys99 with Cys176. A helical transmembrane segment spans residues 100–122 (NIWAAVDVLCCTASIMGLCIISI). The Cytoplasmic segment spans residues 123–143 (DRYIGVSYPLRYPTIVTQKRG). A helical transmembrane segment spans residues 144 to 167 (LMALLCVWALSLVISIGPLFGWRQ). At 168–181 (PAPEDETICQITEE) the chain is on the extracellular side. The helical transmembrane segment at 182–205 (PGYVLFSALGSFYVPLTIILVMYC) threads the bilayer. The Cytoplasmic portion of the chain corresponds to 206-273 (RVYVVAKRES…FSREKKAAKT (68 aa)). The residue at position 215 (Ser215) is a Phosphoserine; by PKA. A helical membrane pass occupies residues 274–295 (LGIVVGCFVLCWLPFFLVMPIG).

This sequence belongs to the G-protein coupled receptor 1 family. Adrenergic receptor subfamily. ADRA1A sub-subfamily. In terms of assembly, homo- and heterooligomer. Heterooligomerizes with ADRA1B homooligomers in cardiac myocytes. Interacts with CAVIN4.

The protein resides in the nucleus membrane. It is found in the cell membrane. Its subcellular location is the cytoplasm. It localises to the membrane. The protein localises to the caveola. This alpha-adrenergic receptor mediates its action by association with G proteins that activate a phosphatidylinositol-calcium second messenger system. Its effect is mediated by G(q) and G(11) proteins. Nuclear ADRA1A-ADRA1B heterooligomers regulate phenylephrine (PE)-stimulated ERK signaling in cardiac myocytes. The polypeptide is Alpha-1A adrenergic receptor (ADRA1A) (Canis lupus familiaris (Dog)).